The chain runs to 763 residues: Phosphoglycerol transferase I (763 aa).

Transmembrane regions (helical) follow at residues 1-21, 26-46, 77-97, and 108-128; these read MSELLSVALFLASVLIYAWKA, WWFAATLTVLGLFVILNITLY, ILPGIGIALALVAVFGALGWV, and VGYSLLALLLALGSVDASPAF.

Belongs to the OpgB family.

The protein resides in the cell inner membrane. It catalyses the reaction a phosphatidylglycerol + a membrane-derived-oligosaccharide D-glucose = a 1,2-diacyl-sn-glycerol + a membrane-derived-oligosaccharide 6-(glycerophospho)-D-glucose.. It functions in the pathway glycan metabolism; osmoregulated periplasmic glucan (OPG) biosynthesis. Functionally, transfers a phosphoglycerol residue from phosphatidylglycerol to the membrane-bound nascent glucan backbones. The polypeptide is Phosphoglycerol transferase I (Salmonella dublin (strain CT_02021853)).